A 2446-amino-acid chain; its full sequence is MDTGDTALGQKATSRSGETDKASGRWRQEQSAVIKMSTFGSHEGQRQPQIEPEQIGNTASAQLFGSGKLASPSEVVQQVAEKQYPPHRPSPYSCQHSLSFPQHSLPQGVMHSTKPHQSLEGPPWLFPGPLPSVASEDLFPFPIHGHSGGYPRKKISSLNPAYSQYSQKSIEQAEEAHKKEHKPKKPGKYICPYCSRACAKPSVLKKHIRSHTGERPYPCIPCGFSFKTKSNLYKHRKSHAHAIKAGLVPFTESAVSKLDLEAGFIDVEAEIHSDGEQSTDTDEESSLFAEASDKMSPGPPIPLDIASRGGYHGSLEESLGGPMKVPILIIPKSGIPLPNESSQYIGPDMLPNPSLNTKADDSHTVKQKLALRLSEKKGQDSEPSLNLLSPHSKGSTDSGYFSRSESAEQQISPPNTNAKSYEEIIFGKYCRLSPRNALSVTTTSQERAAMGRKGIMEPLPHVNTRLDVKMFEDPVSQLIPSKGDVDPSQTSMLKSTKFNSESRQPQIIPSSIRNEGKLYPANFQGSNPVLLEAPVDSSPLIRSNSVPTSSATNLTIPPSLRGSHSFDERMTGSDDVFYPGTVGIPPQRMLRRQAAFELPSVQEGHVEVEHHGRMLKGISSSSLKEKKLSPGDRVGYDYDVCRKPYKKWEDSETPKQNYRDISCLSSLKHGGEYFMDPVVPLQGVPSMFGTTCENRKRRKEKSVGDEEDTPMICSSIVSTPVGIMASDYDPKLQMQEGVRSGFAMAGHENLSHGHTERFDPCRPQLQPGSPSLVSEESPSAIDSDKMSDLGGRKPPGNVISVIQHTNSLSRPNSFERSESAELVACTQDKAPSPSETCDSEISEAPVSPEWAPPGDGAESGGKPSPSQQVQQQSYHTQPRLVRQHNIQVPEIRVTEEPDKPEKEKEAQSKEPEKPVEEFQWPQRSETLSQLPAEKLPPKKKRLRLADMEHSSGESSFESTGTGLSRSPSQESNLSHSSSFSMSFEREETSKLSALPKQDEFGKHSEFLTVPAGSYSLSVPGHHHQKEMRRCSSEQMPCPHPAEVPEVRSKSFDYGNLSHAPVSGAAASTVSPSRERKKCFLVRQASFSGSPEISQGEVGMDQSVKQEQLEHLHAGLRSGWHHGPPAVLPPLQQEDPGKQVAGPCPPLSSGPLHLAQPQIMHMDSQESLRNPLIQPTSYMTSKHLPEQPHLFPHQETIPFSPIQNALFQFQYPTVCMVHLPAQQPPWWQAHFPHPFAQHPQKSYGKPSFQTEIHSSYPLEHVAEHTGKKPAEYAHTKEQTYPCYSGASGLHPKNLLPKFPSDQSSKSTETPSEQVLQEDFASANAGSLQSLPGTVVPVRIQTHVPSYGSVMYTSISQILGQNSPAIVICKVDENMTQRTLVTNAAMQGIGFNIAQVLGQHAGLEKYPIWKAPQTLPLGLESSIPLCLPSTSDSVATLGGSKRMLSPASSLELFMETKQQKRVKEEKMYGQIVEELSAVELTNSDIKKDLSRPQKPQLVRQGCASEPKDGLQSGSSSFSSLSPSSSQDYPSVSPSSREPFLPSKEMLSGSRAPLPGQKSSGPSESKESSDELDIDETASDMSMSPQSSSLPAGDGQLEEEGKGHKRPVGMLVRMASAPSGNVADSTLLLTDMADFQQILQFPSLRTTTTVSWCFLNYTKPNYVQQATFKSSVYASWCISSCNPNPSGLNTKTTLALLRSKQKITAEIYTLAAMHRPGTGKLTSSSAWKQFTQMKPDASFLFGSKLERKLVGNILKERGKGDIHGDKDIGSKQTEPIRIKIFEGGYKSNEDYVYVRGRGRGKYICEECGIRCKKPSMLKKHIRTHTDVRPYVCKLCNFAFKTKGNLTKHMKSKAHMKKCLELGVSMTSVDDTETEEAENLEDLHKAAEKHSMSSISTDHQFSDAEESDGEDGDDNDDDDEDEDDFDDQGDLTPKTRSRSTSPQPPRFSSLPVNVGAVPHGVPSDSSLGHSSLISYLVTLPSIRVTQLMTPSDSCEDTQMTEYQRLFQSKSTDSEPDKDRLDIPSCMDEECMLPSEPSSSPRDFSPSSHHSSPGYDSSPCRDNSPKRYLIPKGDLSPRRHLSPRRDLSPMRHLSPRKEAALRREMSQRDVSPRRHLSPRRPVSPGKDITARRDLSPRRERRYMTTIRAPSPRRALYHNPPLSMGQYLQAEPIVLGPPNLRRGLPQVPYFSLYGDQEGAYEHPGSSLFPEGPNDYVFSHLPLHSQQQVRAPIPMVPVGGIQMVHSMPPALSSLHPSPTLPLPMEGFEEKKGASGESFSKDPYVLSKQHEKRGPHALQSSGPPSTPSSPRLLMKQSTSEDSLNATEREQEENIQTCTKAIASLRIATEEAALLGPDQPARVQEPHQNPLGSAHVSIRHFSRPEPGQPCTSATHPDLHDGEKDNFGTSQTPLAHSTFYSKSCVDDKQLDFHSSKELSSSTEESKDPSSEKSQLH.

Residues 1–93 (MDTGDTALGQ…YPPHRPSPYS (93 aa)) form a disordered region. The segment covering 17–28 (GETDKASGRWRQ) has biased composition (basic and acidic residues). 2 C2H2-type zinc fingers span residues 189 to 211 (YICP…IRSH) and 217 to 239 (YPCI…RKSH). Disordered stretches follow at residues 272–303 (HSDG…PIPL), 340–416 (ESSQ…PPNT), 543–563 (SNSV…LRGS), and 751–985 (SHGH…SFER). 2 stretches are compositionally biased toward polar residues: residues 381–416 (SEPS…PPNT) and 543–556 (SNSV…NLTI). Positions 751-760 (SHGHTERFDP) are enriched in basic and acidic residues. The span at 766–777 (QPGSPSLVSEES) shows a compositional bias: polar residues. Basic and acidic residues predominate over residues 782–791 (DSDKMSDLGG). Positions 800-812 (SVIQHTNSLSRPN) are enriched in polar residues. Phosphoserine is present on Ser-819. The span at 863 to 878 (PSPSQQVQQQSYHTQP) shows a compositional bias: low complexity. Positions 892–916 (RVTEEPDKPEKEKEAQSKEPEKPVE) are enriched in basic and acidic residues. Residues 937 to 943 (PKKKRLR) carry the Nuclear localization signal motif. Phosphoserine occurs at positions 950, 955, 1048, 1443, and 1447. Residues 952–982 (GESSFESTGTGLSRSPSQESNLSHSSSFSMS) are compositionally biased toward low complexity. Residues 1485-1603 (KDLSRPQKPQ…LEEEGKGHKR (119 aa)) form a disordered region. 2 stretches are compositionally biased toward low complexity: residues 1510–1533 (SGSS…SPSS) and 1576–1586 (SDMSMSPQSSS). 2 consecutive C2H2-type zinc fingers follow at residues 1799–1821 (YICE…IRTH) and 1827–1851 (YVCK…SKAH). 2 disordered regions span residues 1882-1951 (AAEK…VNVG) and 2024-2129 (EECM…RRDL). The segment covering 1899 to 1925 (DAEESDGEDGDDNDDDDEDEDDFDDQG) has biased composition (acidic residues). Low complexity predominate over residues 2029-2053 (PSEPSSSPRDFSPSSHHSSPGYDSS). 10 consecutive repeat copies span residues 2053 to 2056 (SPCR), 2059 to 2062 (SPKR), 2071 to 2074 (SPRR), 2083 to 2086 (SPMR), 2089 to 2092 (SPRK), 2106 to 2109 (SPRR), 2112 to 2115 (SPRR), 2118 to 2121 (SPGK), 2130 to 2133 (SPRR), and 2145 to 2148 (SPRR). Residues 2053-2148 (SPCRDNSPKR…TTIRAPSPRR (96 aa)) are 10 X 4 AA tandem repeats of S-P-[RGMKC]-[RK]. Positions 2078–2107 (PRRDLSPMRHLSPRKEAALRREMSQRDVSP) are enriched in basic and acidic residues. A Phosphoserine modification is found at Ser-2118. 3 disordered regions span residues 2242 to 2325 (PALS…QEEN), 2371 to 2403 (HFSR…SQTP), and 2423 to 2446 (HSSK…SQLH). Ser-2297 and Ser-2301 each carry phosphoserine. Residues 2307–2317 (KQSTSEDSLNA) are compositionally biased toward polar residues. Over residues 2387–2396 (PDLHDGEKDN) the composition is skewed to basic and acidic residues. Phosphoserine occurs at positions 2429 and 2431. Positions 2433–2446 (EESKDPSSEKSQLH) are enriched in basic and acidic residues.

As to quaternary structure, interacts with TCF4. As to expression, expressed in brain and skeletal muscle.

It localises to the nucleus. Functionally, this protein specifically binds to the DNA sequence 5'-GGGACTTTCC-3' which is found in the enhancer elements of numerous viral promoters such as those of SV40, CMV, or HIV1. In addition, related sequences are found in the enhancer elements of a number of cellular promoters, including those of the class I MHC, interleukin-2 receptor, somatostatin receptor II, and interferon-beta genes. It may act in T-cell activation. This is Transcription factor HIVEP2 (HIVEP2) from Homo sapiens (Human).